Reading from the N-terminus, the 201-residue chain is Putative Ras-related protein Rab-1C (201 aa).

GTP-binding positions include 15–23 (GDSGVGKSC), 33–40 (YTESYIST), and 63–67 (DTAGQ). Positions 37–45 (YISTIGVDF) match the Effector region motif. S76 carries the post-translational modification (Microbial infection) O-(2-cholinephosphoryl)serine. GTP is bound by residues 121 to 124 (NKSD) and 151 to 153 (SAK). Residues 174 to 201 (GPGAASGGERPNLKIDSTPVKPAGGGCC) form a disordered region. 2 S-geranylgeranyl cysteine lipidation sites follow: C200 and C201.

The protein belongs to the small GTPase superfamily. Rab family. In terms of processing, (Microbial infection) Phosphocholinated at Ser-76 by L.pneumophila AnkX, leading to displace GDP dissociation inhibitors (GDI). Both GDP-bound and GTP-bound forms can be phosphocholinated. Dephosphocholinated by L.pneumophila Lem3, restoring accessibility to L.pneumophila GTPase effector LepB. (Microbial infection) Glycosylated by S.typhimurium protein Ssek3: arginine GlcNAcylation prevents GTPase activity, thereby disrupting vesicular protein transport from the endoplasmic reticulum (ER) to the Golgi compartment.

The protein localises to the membrane. The protein resides in the cytoplasm. It carries out the reaction GTP + H2O = GDP + phosphate + H(+). Its function is as follows. Protein transport. Probably involved in vesicular traffic. This Homo sapiens (Human) protein is Putative Ras-related protein Rab-1C (RAB1C).